Reading from the N-terminus, the 1673-residue chain is Leucine-rich repeat- and IQ domain-containing protein 1 (1673 aa).

Disordered stretches follow at residues 22–48 and 189–208; these read ISIS…SDTD and LEEK…KRTF. One copy of the LRR 1 repeat lies at 34–59; the sequence is NDSVSDTQSDSSDTDLLELPESVLHY. The stretch at 216–239 is one LRR 2 repeat; that stretch reads QCWMRQFEVEKKHLEDLQKQDQDK. Residues 291 to 320 enclose the IQ 1 domain; the sequence is RYDAAVKIQATYRASVTYRKYSPIIKEQME. The segment at 324 to 374 is disordered; that stretch reads RRAQELKEKEAKIRQKEEEKRRRLEEEQRVEEEKKKKMLEERRRREREYEE. Over residues 326–374 the composition is skewed to basic and acidic residues; sequence AQELKEKEAKIRQKEEEKRRRLEEEQRVEEEKKKKMLEERRRREREYEE. The stretch at 491-516 is one LRR 3 repeat; that stretch reads LPKLKINENLSKNQCSEQPSDQEFNA. 2 disordered regions span residues 544–658 and 679–702; these read ESDT…EEIP and EGEA…GSHS. 2 stretches are compositionally biased toward basic and acidic residues: residues 549-567 and 588-602; these read TEEH…ETEK and EETR…EIKE. Over residues 603-629 the composition is skewed to polar residues; sequence MTQQGGPSDENNSSPISMQKSLPSLTP. One copy of the LRR 4 repeat lies at 641-665; sequence LEEDQETDLKSERIEEIPEEGVLSC. The span at 647 to 656 shows a compositional bias: basic and acidic residues; sequence TDLKSERIEE. LRR repeat units follow at residues 830–852, 853–873, 874–894, 895–919, 921–939, 940–961, 962–983, 984–1005, 1007–1029, 1030–1054, and 1067–1090; these read CSNL…LSHC, TRLK…CENL, ENLS…GFDG, CTNL…SLKY, QELT…LCEA, PTIV…IGNC, GLLQ…LRNH, VLLR…LSSC, LPLL…LFHL, VSLE…WFNA, and PVLQ…VLNG. 2 disordered regions span residues 1163-1230 and 1308-1330; these read AHEQ…HCEE and PTTT…EERR. Composition is skewed to polar residues over residues 1168–1226 and 1308–1325; these read DVNT…PSTS and PTTT…QTTS. IQ domains follow at residues 1280–1309 and 1340–1369; these read PTKA…MHPT and REKA…AIKD. Residues 1378-1405 form an LRR 16 repeat; sequence EIDLEDFEFDEDALEKDWPALDSTGFPS.

The sequence is that of Leucine-rich repeat- and IQ domain-containing protein 1 (Lrriq1) from Mus musculus (Mouse).